The chain runs to 193 residues: 7-methyl-GTP pyrophosphatase (193 aa).

The Proton acceptor role is filled by Asp70.

Belongs to the Maf family. YceF subfamily. Requires a divalent metal cation as cofactor.

It localises to the cytoplasm. The catalysed reaction is N(7)-methyl-GTP + H2O = N(7)-methyl-GMP + diphosphate + H(+). Nucleoside triphosphate pyrophosphatase that hydrolyzes 7-methyl-GTP (m(7)GTP). May have a dual role in cell division arrest and in preventing the incorporation of modified nucleotides into cellular nucleic acids. The chain is 7-methyl-GTP pyrophosphatase from Vibrio cholerae serotype O1 (strain ATCC 39315 / El Tor Inaba N16961).